The primary structure comprises 449 residues: XK-related protein 2 (449 aa).

The next 10 membrane-spanning stretches (helical) occupy residues 35–55 (FSILFSTFLYCGEAASALYMV), 68–88 (TYTFSFFMFSSIMVQLTLIFV), 98–118 (LSLFMHLILLGPVIRCLEAMI), 174–194 (IQAFLGSVPQLTYQLYVSLIS), 204–224 (LMAFSLISVTYGATLCNMLAI), 241–261 (LCITVWRTLEITSRLVILVLF), 269–289 (AVPFLVLNFLIILFEPWVKFW), 306–326 (VGTLVVLISVTILYAGINFSC), 357–377 (LVENVIMVLVFKYFGVKVLLN), and 382–402 (LIAVQLIIAYLISIGVMLLFF).

Belongs to the XK family.

It localises to the membrane. In Mus musculus (Mouse), this protein is XK-related protein 2 (Xkrx).